We begin with the raw amino-acid sequence, 332 residues long: L-lactate dehydrogenase A chain (332 aa).

Residues 29 to 57 (GAVGMACAISILMKDLADELALVDVVEDK) and Arg99 each bind NAD(+). Substrate is bound by residues Arg106, Asn138, and Arg169. Asn138 is an NAD(+) binding site. His193 (proton acceptor) is an active-site residue. Thr248 contributes to the substrate binding site.

This sequence belongs to the LDH/MDH superfamily. LDH family. As to quaternary structure, homotetramer.

It localises to the cytoplasm. It catalyses the reaction (S)-lactate + NAD(+) = pyruvate + NADH + H(+). The protein operates within fermentation; pyruvate fermentation to lactate; (S)-lactate from pyruvate: step 1/1. Its function is as follows. Interconverts simultaneously and stereospecifically pyruvate and lactate with concomitant interconversion of NADH and NAD(+). The chain is L-lactate dehydrogenase A chain (LDHA) from Python regius (Ball python).